The following is a 226-amino-acid chain: Ribonuclease 3 (226 aa).

The RNase III domain occupies 5–127 (LERLQRALGY…IIGAIYLDAG (123 aa)). A Mg(2+)-binding site is contributed by E40. D44 is a catalytic residue. 2 residues coordinate Mg(2+): D113 and E116. E116 is an active-site residue. The region spanning 154 to 224 (DSKTRLQEYL…AKQALLALGV (71 aa)) is the DRBM domain.

The protein belongs to the ribonuclease III family. As to quaternary structure, homodimer. The cofactor is Mg(2+).

The protein resides in the cytoplasm. The enzyme catalyses Endonucleolytic cleavage to 5'-phosphomonoester.. In terms of biological role, digests double-stranded RNA. Involved in the processing of primary rRNA transcript to yield the immediate precursors to the large and small rRNAs (23S and 16S). Processes some mRNAs, and tRNAs when they are encoded in the rRNA operon. Processes pre-crRNA and tracrRNA of type II CRISPR loci if present in the organism. The polypeptide is Ribonuclease 3 (Hahella chejuensis (strain KCTC 2396)).